The chain runs to 518 residues: Putative Rieske 2Fe-2S iron-sulfur protein MSMEG_6410/MSMEI_6242 (518 aa).

Residue Lys375 forms an Isoglutamyl lysine isopeptide (Lys-Gln) (interchain with Q-Cter in protein Pup) linkage. Residues 431-518 (LYTFFKCLTD…KGHELRCQKL (88 aa)) enclose the Rieske domain. 4 residues coordinate [2Fe-2S] cluster: Cys471, His473, Cys491, and His494.

[2Fe-2S] cluster serves as cofactor.

In Mycolicibacterium smegmatis (strain ATCC 700084 / mc(2)155) (Mycobacterium smegmatis), this protein is Putative Rieske 2Fe-2S iron-sulfur protein MSMEG_6410/MSMEI_6242.